We begin with the raw amino-acid sequence, 149 residues long: Gamma-glutamylaminecyclotransferase (149 aa).

7 to 10 (YGTL) is a substrate binding site. Catalysis depends on Glu-82, which acts as the Proton acceptor.

The protein belongs to the gamma-glutamylcyclotransferase family. In terms of assembly, monomer.

It catalyses the reaction epsilon-(gamma-L-glutamyl)-L-lysine = 5-oxo-L-proline + L-lysine. Its function is as follows. Contributes to degradation of proteins cross-linked by transglutaminases by degrading the cross-link between a lysine and a glutamic acid residue. Catalyzes the formation of 5-oxo-L-proline from L-gamma-glutamyl-L-epsilon-lysine. Inactive with L-gamma-glutamyl-alpha-amino acid substrates such as L-gamma-glutamyl-L-alpha-cysteine and L-gamma-glutamyl-L-alpha-alanine. The chain is Gamma-glutamylaminecyclotransferase (Ggact) from Mus musculus (Mouse).